Reading from the N-terminus, the 214-residue chain is uncharacterized protein (214 aa).

Transmembrane regions (helical) follow at residues 18-38 (LLLLCIGGFYALGVSLSNTFV), 51-71 (DLALYNLAVVTMQPLTFIVAG), 80-100 (ILVLRLGVSCLAVFFVTVLLV), 108-128 (LLVLGALLGVGYGFYWLAFNV), and 145-165 (FFGVLTSSAGMIGPIAAGYII).

The protein localises to the cell membrane. This is an uncharacterized protein from Geobacillus stearothermophilus (Bacillus stearothermophilus).